We begin with the raw amino-acid sequence, 147 residues long: Hemoglobin subunit gamma (147 aa).

One can recognise a Globin domain in the interval 3–147 (NFTAEDKAAI…VASALASRYH (145 aa)). Heme b is bound by residues His-64 and His-93.

Belongs to the globin family. As to quaternary structure, heterotetramer of two alpha chains and two gamma chains in fetal hemoglobin (Hb F). In terms of tissue distribution, red blood cells.

Gamma chains make up the fetal hemoglobin F, in combination with alpha chains. The polypeptide is Hemoglobin subunit gamma (HBG) (Alouatta belzebul (Red-handed howler monkey)).